The primary structure comprises 239 residues: Large ribosomal subunit protein uL1 (239 aa).

This sequence belongs to the universal ribosomal protein uL1 family. As to quaternary structure, part of the 50S ribosomal subunit.

Its function is as follows. Binds directly to 23S rRNA. The L1 stalk is quite mobile in the ribosome, and is involved in E site tRNA release. Protein L1 is also a translational repressor protein, it controls the translation of the L11 operon by binding to its mRNA. In Rickettsia akari (strain Hartford), this protein is Large ribosomal subunit protein uL1.